The sequence spans 33 residues: uncharacterized protein (33 aa).

The Cytoplasmic portion of the chain corresponds to 1–12; sequence MKENKVQQISHK. A helical membrane pass occupies residues 13–33; that stretch reads LINIVVFVAIVEYAYLFLHFY.

Its subcellular location is the cell inner membrane. This is an uncharacterized protein from Escherichia coli (strain K12).